The following is a 42-amino-acid chain: MNLFDLQSMETPKEEAMGDVETGSRASLLLCGDSSLSITTCN.

The propeptide occupies 1 to 21 (MNLFDLQSMETPKEEAMGDVE). Positions 1–21 (MNLFDLQSMETPKEEAMGDVE) are disordered. Cross-links (lanthionine (Ser-Cys)) lie at residues 24–31 (SRASLLLC) and 34–41 (SSLSITTC). A 2,3-didehydroalanine (Ser) mark is found at Ser27 and Ser37.

Belongs to the lanthionine-containing morphogen family. Maturation involves the enzymatic conversion of Ser into dehydrated AA and the formation of thioether bonds with cysteine, probably by RamC. This is followed by membrane translocation and cleavage of the modified precursor. The RamS precursor protein (detected by an anti-propeptide antibody and by a C-terminal His-tag) is detected from at least 16 hours post-germination; its apparent molecular weight decreases starting from about 34 hours, when its probable modifying enzyme ramC is transcribed. Surfactin, a B.subtilis cyclic lipopeptide antibiotic which prevents aerial hyphae formation in S.coelicolor, decreases localization of RamS precursor protein to the cell membrane, suggesting that processing only occurs at the cell membrane.

Its subcellular location is the cell membrane. The protein localises to the secreted. It is found in the spore wall. In terms of biological role, stably accumulated precursor of SapB. Lanthionine-containing peptide devoid of antibiotic properties. A surface active peptide involved in the efficient formation of aerial mycelium when cells are grown in rich media. Has an overlapping function with the surface-active chaplin proteins; chaplins are essential on minimal medium while on rich medium both chaplins and SapB are required for efficient aerial hyphae formation. Required under conditions of high osmolarity where it may change the physical properties of the chaplin layer to allow hyphae to grow into air. Suggested to self-assemble at air-water interfaces, thus providing a film of surfactant through which nascent aerial hyphae can emerge; the aerial hyphae differentiate further into spores. Application to bald mutants (bld, unable to make aerial hyphae) restores hyphae growth. Application to chaplin negative mutants as well as ramC-ramS-ramA-ramB and ramR deletions also restores aerial hyphae growth and sporulation. Reduces surface tension of water from 72 to 30 mJ/m(2). The protein is Lanthionine-containing peptide SapB precursor RamS (ramS) of Streptomyces coelicolor (strain ATCC BAA-471 / A3(2) / M145).